The following is a 586-amino-acid chain: Lamin-B1 (586 aa).

The interval 1–31 (MATATPVPPRMGSRAGGPTTPLSPTRLSRLQ) is disordered. Alanine 2 carries the post-translational modification N-acetylalanine. The segment at 2-34 (ATATPVPPRMGSRAGGPTTPLSPTRLSRLQEKE) is head. Phosphothreonine is present on residues threonine 3 and threonine 5. Omega-N-methylarginine is present on arginine 14. Threonine 20 bears the Phosphothreonine mark. Serine 23 bears the Phosphoserine mark. Threonine 25 carries the phosphothreonine modification. Phosphoserine is present on serine 28. The IF rod domain occupies 32–388 (EKEELRELND…KLLEGEEERL (357 aa)). Residues 35–69 (ELRELNDRLAVYIDKVRSLETENSALQLQVTEREE) are coil 1A. Positions 70–81 (VRGRELTGLKAL) are linker 1. The interval 82–215 (YETELADARR…EFRKSMYEEE (134 aa)) is coil 1B. Residue lysine 102 forms a Glycyl lysine isopeptide (Lys-Gly) (interchain with G-Cter in SUMO2) linkage. Lysine 111 bears the N6-acetyllysine mark. Lysine 123 participates in a covalent cross-link: Glycyl lysine isopeptide (Lys-Gly) (interchain with G-Cter in SUMO2). The residue at position 126 (serine 126) is a Phosphoserine. Lysine 145 participates in a covalent cross-link: Glycyl lysine isopeptide (Lys-Gly) (interchain with G-Cter in SUMO2). Residue lysine 157 is modified to N6-acetyllysine; alternate. Residue lysine 157 forms a Glycyl lysine isopeptide (Lys-Gly) (interchain with G-Cter in SUMO2); alternate linkage. Position 158 is a phosphoserine (serine 158). Lysine 181 participates in a covalent cross-link: Glycyl lysine isopeptide (Lys-Gly) (interchain with G-Cter in SUMO2). Serine 200, serine 210, and serine 232 each carry phosphoserine. The interval 216–243 (INETRRKHETRLVEVDSGRQIEYEYKLA) is linker 2. Glycyl lysine isopeptide (Lys-Gly) (interchain with G-Cter in SUMO2) cross-links involve residues lysine 241 and lysine 261. Positions 244–386 (QALHEMREQH…YRKLLEGEEE (143 aa)) are coil 2. Residue lysine 271 is modified to N6-acetyllysine; alternate. A Glycyl lysine isopeptide (Lys-Gly) (interchain with G-Cter in SUMO2); alternate cross-link involves residue lysine 271. A phosphoserine mark is found at serine 278 and serine 302. Lysine 312 participates in a covalent cross-link: Glycyl lysine isopeptide (Lys-Gly) (interchain with G-Cter in SUMO2). The residue at position 330 (lysine 330) is an N6-acetyllysine; alternate. Lysine 330 participates in a covalent cross-link: Glycyl lysine isopeptide (Lys-Gly) (interchain with G-Cter in SUMO2); alternate. Phosphoserine occurs at positions 375 and 393. A tail region spans residues 387–586 (RLKLSPSPSS…RASNRSCAIM (200 aa)). The interval 388-432 (LKLSPSPSSRVTVSRASSSRSVRTTRGKRKRVDVEESEASSSVSI) is disordered. The segment covering 390 to 409 (LSPSPSSRVTVSRASSSRSV) has biased composition (low complexity). A glycan (O-linked (GlcNAc) threonine) is linked at threonine 399. Residue arginine 413 is modified to Omega-N-methylarginine. The Nuclear localization signal motif lies at 415-420 (KRKRVD). The LTD domain occupies 430 to 546 (VSISHSASAT…EEVAQRSTVF (117 aa)). Position 483 is an N6-acetyllysine (lysine 483). Lysine 532 participates in a covalent cross-link: Glycyl lysine isopeptide (Lys-Gly) (interchain with G-Cter in SUMO2). The residue at position 534 (serine 534) is a Phosphoserine. A Glycyl lysine isopeptide (Lys-Gly) (interchain with G-Cter in SUMO2) cross-link involves residue lysine 547. At threonine 575 the chain carries Phosphothreonine. Cysteine 583 carries the cysteine methyl ester modification. Cysteine 583 carries the S-farnesyl cysteine lipid modification. Residues 584 to 586 (AIM) constitute a propeptide, removed in mature form.

This sequence belongs to the intermediate filament family. In terms of assembly, homodimer. Lamin dimers then assemble into dimeric head-to-tail polymers. Ultimately, two head-to-tail polymers assemble laterally into a protofilament with a uniformly shaped rod of 3.5 nm in diameter. Interacts with SPAG4 and SEPT12. B-type lamins undergo a series of modifications, such as farnesylation and phosphorylation. Increased phosphorylation of the lamins occurs before envelope disintegration and probably plays a role in regulating lamin associations. Post-translationally, phosphorylation plays a key role in lamin organization, subcellular localization and nuclear envelope disintegration. Phosphorylation by CDK1 at Ser-23 and Ser-393 at the onset of mitosis drives lamin disassembly and nuclear envelope breakdown.

The protein localises to the nucleus lamina. Its function is as follows. Lamins are intermediate filament proteins that assemble into a filamentous meshwork, and which constitute the major components of the nuclear lamina, a fibrous layer on the nucleoplasmic side of the inner nuclear membrane. Lamins provide a framework for the nuclear envelope, bridging the nuclear envelope and chromatin, thereby playing an important role in nuclear assembly, chromatin organization, nuclear membrane and telomere dynamics. The structural integrity of the lamina is strictly controlled by the cell cycle, as seen by the disintegration and formation of the nuclear envelope in prophase and telophase, respectively. The sequence is that of Lamin-B1 (LMNB1) from Homo sapiens (Human).